A 276-amino-acid polypeptide reads, in one-letter code: TIMELESS-interacting protein (276 aa).

The tract at residues 1 to 54 is disordered; that stretch reads MLEQEENGLFEIPDYEHVEDETFPPFPPPGSPERDPAEAEPDEGSGAPVPVPPK. Residues 64 to 140 are interaction with TIMELESS; it reads LDATRLTSER…KEVQTCLKRI (77 aa). The segment covering 217 to 243 has biased composition (polar residues); it reads SNSQSLENDVTVEESSTGENQEESNGL. Residues 217–276 are disordered; it reads SNSQSLENDVTVEESSTGENQEESNGLISADGPHDVPSASTQEEGQLEAEETQLDHPNLD. At serine 219 the chain carries Phosphoserine. Residue threonine 233 is modified to Phosphothreonine.

The protein belongs to the CSM3 family. In terms of assembly, interacts with TIMELESS, which impairs TIMELESS self-association (via N-terminus). Associates with the MCM2-7 complex. Interacts with RPA2, PRDX2.

It localises to the cytoplasm. The protein resides in the nucleus. Its function is as follows. Plays an important role in the control of DNA replication and the maintenance of replication fork stability. Important for cell survival after DNA damage or replication stress. May be specifically required for the ATR-CHEK1 pathway in the replication checkpoint induced by hydroxyurea or ultraviolet light. Forms a complex with TIMELESS and this complex regulates DNA replication processes under both normal and stress conditions, stabilizes replication forks and influences both CHEK1 phosphorylation and the intra-S phase checkpoint in response to genotoxic stress. The polypeptide is TIMELESS-interacting protein (Tipin) (Rattus norvegicus (Rat)).